The following is a 1021-amino-acid chain: Putative 115 kDa protein in type-1 retrotransposable element R1DM (1021 aa).

Residues 479-741 form the Reverse transcriptase domain; that stretch reads RCIRLGYFPA…RSCRYLGITV (263 aa). The tract at residues 955–971 is gag-like cysteine motif; it reads CACGDPYEDWMHILCAC.

This Drosophila melanogaster (Fruit fly) protein is Putative 115 kDa protein in type-1 retrotransposable element R1DM (R1A1-element\ORF2).